Here is a 305-residue protein sequence, read N- to C-terminus: Myb-like transcriptional regulator basR (305 aa).

3 Myb-like domains span residues 5–59 (RRRW…YNRF), 60–110 (TGGL…HHCL), and 111–162 (NPEL…TILS). Residues 175–215 (PCCDSPSPSKSSRRPPSTPTSTPQVPGSRQGSSYDPYDYGS) form a disordered region. Residues 198 to 207 (QVPGSRQGSS) show a composition bias toward polar residues.

It localises to the nucleus. Its function is as follows. Transcription regulator that acts as a central regulatory node for the integration of external bacterial signals leading to the regulation of secondary metabolite gene clusters such as orsellinic, lecanoric acid, cichorine, 2,4-dihydroxy-3-methyl-6-(2-oxopropyl)benzaldehyde (dba), emericellamide or microperfuranone clusters. The polypeptide is Myb-like transcriptional regulator basR (Emericella nidulans (strain FGSC A4 / ATCC 38163 / CBS 112.46 / NRRL 194 / M139) (Aspergillus nidulans)).